Here is a 1033-residue protein sequence, read N- to C-terminus: Tyrosine-protein kinase-like otk (1033 aa).

The first 22 residues, Met1 to Ala22, serve as a signal peptide directing secretion. At Ser23–Ala581 the chain is on the extracellular side. Ig-like C2-type domains follow at residues Ser25 to Ser114, Leu113 to Ser199, Pro251 to Ser365, Pro368 to Asn463, and Pro468 to Ile558. Asn39 carries an N-linked (GlcNAc...) asparagine glycan. Cystine bridges form between Cys46–Cys95, Cys137–Cys188, Cys276–Cys354, and Cys399–Cys447. Residues Asn336, Asn417, Asn429, Asn444, Asn457, Asn512, and Asn524 are each glycosylated (N-linked (GlcNAc...) asparagine). A disulfide bridge links Cys490 with Cys542. The chain crosses the membrane as a helical span at residues Val582–Trp602. Topologically, residues Cys603–Lys1033 are cytoplasmic. Disordered stretches follow at residues Leu617–Ala679 and Ser718–Met760. Polar residues predominate over residues Lys655 to Arg673. Ser678 carries the phosphoserine modification. One can recognise a Protein kinase; inactive domain in the interval Leu692–Met1028. Residues Ser720 to Ser731 show a composition bias toward basic and acidic residues.

It belongs to the protein kinase superfamily. Tyr protein kinase family. Insulin receptor subfamily. As to quaternary structure, interacts with plexA; component of a receptor complex that mediates the repulsive signaling in response to Semaphorin ligands.

It is found in the cell membrane. Its function is as follows. Acts as a calcium-dependent, homophilic cell adhesion molecule that regulates neural recognition during the development of the nervous system. Component of the repulsive Plexin signaling response to regulate motor axon guidance at the embryonic stage. Also component of a receptor complex that is required in the adult visual system to innervate the lamina layer; specific targeting of R1-R6 axons. In Drosophila yakuba (Fruit fly), this protein is Tyrosine-protein kinase-like otk.